The primary structure comprises 442 residues: tRNA modification GTPase MnmE (442 aa).

Residues Arg-22, Glu-79, and Lys-119 each contribute to the (6S)-5-formyl-5,6,7,8-tetrahydrofolate site. In terms of domain architecture, TrmE-type G spans 216–366; that stretch reads GIKTCLVGAP…LLEKIKSIFA (151 aa). Asn-226 provides a ligand contact to K(+). GTP-binding positions include 226 to 231, 245 to 251, and 270 to 273; these read NSGKSS, SEIPGTT, and DTAG. Ser-230 is a Mg(2+) binding site. Residues Ser-245, Ile-247, and Thr-250 each contribute to the K(+) site. Thr-251 contributes to the Mg(2+) binding site. (6S)-5-formyl-5,6,7,8-tetrahydrofolate is bound at residue Lys-442.

Belongs to the TRAFAC class TrmE-Era-EngA-EngB-Septin-like GTPase superfamily. TrmE GTPase family. Homodimer. Heterotetramer of two MnmE and two MnmG subunits. Requires K(+) as cofactor.

The protein localises to the cytoplasm. Its function is as follows. Exhibits a very high intrinsic GTPase hydrolysis rate. Involved in the addition of a carboxymethylaminomethyl (cmnm) group at the wobble position (U34) of certain tRNAs, forming tRNA-cmnm(5)s(2)U34. The polypeptide is tRNA modification GTPase MnmE (Mesomycoplasma hyopneumoniae (strain 7448) (Mycoplasma hyopneumoniae)).